A 26-amino-acid chain; its full sequence is Muscarinic toxin-like protein 1 (26 aa).

It belongs to the three-finger toxin family. Short-chain subfamily. Orphan group VIII (haditoxin) sub-subfamily. Homodimer; non-covalently linked. Expressed by the venom gland.

Its subcellular location is the secreted. Functionally, antagonist of muscle and neuronal nicotinic acetylcholine receptors (nAChR) with highest affinity for neuronal alpha-7/CHRNA7 nAChRs. This chain is Muscarinic toxin-like protein 1, found in Naja naja (Indian cobra).